The chain runs to 246 residues: Flavin-dependent thymidylate synthase (246 aa).

The ThyX domain maps to 17–241 (VTVELVKHSA…PLTYAAFNTN (225 aa)). Residues S69, 92 to 94 (RHR), and E101 contribute to the FAD site. DUMP contacts are provided by residues 89 to 92 (EFMR), 101 to 105 (EESGR), and R173. The short motif at 92–103 (RHRVGWSYNEES) is the ThyX motif element. Residues 189 to 191 (NAR) and H195 each bind FAD. R200 lines the dUMP pocket. R200 functions as the Involved in ionization of N3 of dUMP, leading to its activation in the catalytic mechanism.

The protein belongs to the thymidylate synthase ThyX family. As to quaternary structure, homotetramer. FAD serves as cofactor.

The catalysed reaction is dUMP + (6R)-5,10-methylene-5,6,7,8-tetrahydrofolate + NADPH + H(+) = dTMP + (6S)-5,6,7,8-tetrahydrofolate + NADP(+). Its pathway is pyrimidine metabolism; dTTP biosynthesis. Functionally, catalyzes the reductive methylation of 2'-deoxyuridine-5'-monophosphate (dUMP) to 2'-deoxythymidine-5'-monophosphate (dTMP) while utilizing 5,10-methylenetetrahydrofolate (mTHF) as the methyl donor, and NADPH and FADH(2) as the reductant. In Streptomyces avermitilis (strain ATCC 31267 / DSM 46492 / JCM 5070 / NBRC 14893 / NCIMB 12804 / NRRL 8165 / MA-4680), this protein is Flavin-dependent thymidylate synthase.